The primary structure comprises 349 residues: MKLHQGLVCLSVLILLPTCILGDRKFEVYWNIPTFMCPDQNKTIMDLNKKHGVIQNTEDLFRGDKISLLYHPGAFPAITRNKTTNTLIYENGGVPQAGNLSLHLKLLEKDINEQITDKNFSGLAVIDFELWRPIFRQNGGSLSDYQNLSLKLEKDLHPEFNEDQLRKEAERRIEKFGRSFIKQTLIKAKKLRPKAQWGYYAFPYCFNGRRRYVDTCIPSAKIDNDRILYMFENSDVIYPAVYLQTDLAQKNQTGLVKGRVDEAVRMAKMVKKPAKPPVLVYHRYVFTDTLEYISKENTTAVFKAMKDNGADGVIIWGSSFDLNSKEKCAKFLDYLREVLWPVIDEVKRS.

The signal sequence occupies residues 1–25 (MKLHQGLVCLSVLILLPTCILGDRK). Intrachain disulfides connect Cys37/Cys328 and Cys205/Cys216. Asn41, Asn81, Asn99, and Asn119 each carry an N-linked (GlcNAc...) asparagine glycan. Glu129 (proton donor) is an active-site residue. N-linked (GlcNAc...) asparagine glycosylation is present at Asn147. 2 N-linked (GlcNAc...) asparagine glycosylation sites follow: Asn251 and Asn297.

The protein belongs to the glycosyl hydrolase 56 family. In terms of tissue distribution, expressed in salivary glands.

Its subcellular location is the secreted. The catalysed reaction is Random hydrolysis of (1-&gt;4)-linkages between N-acetyl-beta-D-glucosamine and D-glucuronate residues in hyaluronate.. Functionally, hydrolyzes high molecular weight hyaluronic acid to produce small oligosaccharides. This is Hyaluronidase Tab y 2.0101 from Tabanus yao (Horsefly).